A 314-amino-acid polypeptide reads, in one-letter code: BURP domain-containing protein 8 (314 aa).

The N-terminal stretch at Met-1–Gly-16 is a signal peptide. One can recognise a BURP domain in the interval Phe-98–Asn-314.

Expressed in shoot and panicles.

The protein is BURP domain-containing protein 8 (BURP8) of Oryza sativa subsp. japonica (Rice).